The chain runs to 784 residues: Cas scaffolding protein family member 4 (784 aa).

In terms of domain architecture, SH3 spans 11–73; it reads PKALLARALY…PANRLQILEE (63 aa). Phosphoserine is present on residues serine 197, serine 246, serine 302, serine 373, and serine 387. The tract at residues 343 to 376 is disordered; the sequence is TPNIYDVPRAMPDVPQAGKELGKAGGPSENSVDH. Positions 466-536 form a coiled coil; that stretch reads RDSLEANIDA…LLETKERLES (71 aa). Positions 614–635 are disordered; the sequence is KEGESYQRKAPFQKQRASEQPP.

Belongs to the CAS family. As to quaternary structure, interacts (via SH3 domain) with PTK2/FAK1 (via C-terminus). Post-translationally, phosphorylated on tyrosines by SRC.

The protein localises to the cytoplasm. It localises to the cytoskeleton. Its subcellular location is the cell junction. It is found in the focal adhesion. In terms of biological role, docking protein that plays a role in tyrosine kinase-based signaling related to cell adhesion and cell spreading. Regulates PTK2/FAK1 activity, focal adhesion integrity, and cell spreading. This Sus scrofa (Pig) protein is Cas scaffolding protein family member 4.